A 288-amino-acid chain; its full sequence is Glucose-1-phosphate thymidylyltransferase (288 aa).

The Mg(2+) site is built by Asp108 and Asp223.

The protein belongs to the glucose-1-phosphate thymidylyltransferase family. In terms of assembly, homotetramer. Requires Mg(2+) as cofactor.

The catalysed reaction is dTTP + alpha-D-glucose 1-phosphate + H(+) = dTDP-alpha-D-glucose + diphosphate. Catalyzes the formation of dTDP-glucose, from dTTP and glucose 1-phosphate, as well as its pyrophosphorolysis. The sequence is that of Glucose-1-phosphate thymidylyltransferase (rmlA1) from Neisseria meningitidis serogroup A / serotype 4A (strain DSM 15465 / Z2491).